The sequence spans 611 residues: DNA mismatch repair protein MutL (611 aa).

A disordered region spans residues 364 to 384 (NVNSKPSKYRPATSPTVPKYT).

Belongs to the DNA mismatch repair MutL/HexB family.

This protein is involved in the repair of mismatches in DNA. It is required for dam-dependent methyl-directed DNA mismatch repair. May act as a 'molecular matchmaker', a protein that promotes the formation of a stable complex between two or more DNA-binding proteins in an ATP-dependent manner without itself being part of a final effector complex. In Rickettsia bellii (strain OSU 85-389), this protein is DNA mismatch repair protein MutL.